A 616-amino-acid polypeptide reads, in one-letter code: MLNRYPLWKNLMVIFIVAIGILYSLPNIYGEDPAVQISGTRGQEANTSVLGQVQDVLKTNNLPTKSIVLENGSILARFTNTDDQLLAKDKIAERLGNNYTTALNLAPATPAWLSMFGANPMKWGLDLRGGVRFLMEVDMNATLVKRQEQLQDSLRGELRKEKIQYTAIKNTEHFGTLITLANVSQRAKAERIIRQLHPTLDITEPDADSINLGLSTAALNEARDLAIEQNLTILRKRVAELGVAEAVIQRQGAERIVIELPGVQDTARAKEILGATATLEFRIVNQNVTADAISRNMLPADSEVKYDRQGHPVALFKRAVLGGEHIINSSSGLDQHSSTPQVSVTLDSEGGEIMSQTTKKYYKKPMATLYVEYKDNGKKDENGKTILEKHEEVINVATIQGRFGSNFQITGVDSIAEAHNLSTLLKSGALIAPIQIVEERTIGPSLGAQNVEQGINASLWGLVAVIAFMLFYYKMFGVIASFALVINIVLLVGLMSILPGATLSMPGIAGIVLTLGMSVDANVLIFERIKEEIRNGRSIQQAINEGYNGAFTSIFDANLTTILTAIILYAVGTGPIQGFAITLSLGVAISMFTAITGTRALVNALYGGKQLKKLLI.

Transmembrane regions (helical) follow at residues 11-31 (LMVI…IYGE), 453-473 (QGIN…LFYY), 475-495 (MFGV…VGLM), 497-517 (ILPG…TLGM), 547-569 (YNGA…IILY), and 585-605 (LGVA…VNAL).

The protein belongs to the SecD/SecF family. SecD subfamily. In terms of assembly, forms a complex with SecF. Part of the essential Sec protein translocation apparatus which comprises SecA, SecYEG and auxiliary proteins SecDF-YajC and YidC.

It localises to the cell inner membrane. Functionally, part of the Sec protein translocase complex. Interacts with the SecYEG preprotein conducting channel. SecDF uses the proton motive force (PMF) to complete protein translocation after the ATP-dependent function of SecA. This chain is Protein translocase subunit SecD, found in Haemophilus influenzae (strain ATCC 51907 / DSM 11121 / KW20 / Rd).